Here is a 280-residue protein sequence, read N- to C-terminus: Serine protease 33 (280 aa).

The signal sequence occupies residues 1 to 22 (MRGVSCLQVLLLLVLGAAGTQG). The Peptidase S1 domain maps to 37–279 (IVGGRDGRDG…YSPWIQARVS (243 aa)). Cysteines 62 and 78 form a disulfide. Active-site charge relay system residues include His77 and Asp126. 3 disulfides stabilise this stretch: Cys160–Cys237, Cys193–Cys216, and Cys227–Cys255. The active-site Charge relay system is the Ser231.

This sequence belongs to the peptidase S1 family. In terms of tissue distribution, predominantly expressed in macrophages. Present in the spleen, small and large intestine, lung and brain (at protein level). Highly expressed in peripheral leukocytes, ovary, retina, spleen and stomach. Moderately expressed in thymus, uterus and platelets, as well as some brain tissues, such as thalamus and fetal brain.

Its subcellular location is the secreted. In terms of biological role, serine protease that has amidolytic activity, cleaving its substrates before Arg residues. This chain is Serine protease 33 (PRSS33), found in Homo sapiens (Human).